Here is a 289-residue protein sequence, read N- to C-terminus: Pyridoxal kinase PdxY (289 aa).

Residues Ser9 and 44–45 contribute to the substrate site; that span reads TQ. ATP-binding residues include Asp112, Val144, Glu149, and Lys182. Residue Asp221 coordinates substrate.

The protein belongs to the pyridoxine kinase family. PdxY subfamily. Homodimer. Mg(2+) is required as a cofactor.

The catalysed reaction is pyridoxal + ATP = pyridoxal 5'-phosphate + ADP + H(+). It participates in cofactor metabolism; pyridoxal 5'-phosphate salvage; pyridoxal 5'-phosphate from pyridoxal: step 1/1. Pyridoxal kinase involved in the salvage pathway of pyridoxal 5'-phosphate (PLP). Catalyzes the phosphorylation of pyridoxal to PLP. In Vibrio parahaemolyticus serotype O3:K6 (strain RIMD 2210633), this protein is Pyridoxal kinase PdxY.